The sequence spans 146 residues: Tol-Pal system protein TolR (146 aa).

Residues 16–36 (VVPYIDVMLVLLVIFMVTAPM) traverse the membrane as a helical segment.

This sequence belongs to the ExbD/TolR family. In terms of assembly, the Tol-Pal system is composed of five core proteins: the inner membrane proteins TolA, TolQ and TolR, the periplasmic protein TolB and the outer membrane protein Pal. They form a network linking the inner and outer membranes and the peptidoglycan layer.

It localises to the cell inner membrane. In terms of biological role, part of the Tol-Pal system, which plays a role in outer membrane invagination during cell division and is important for maintaining outer membrane integrity. In Pseudomonas aeruginosa (strain ATCC 15692 / DSM 22644 / CIP 104116 / JCM 14847 / LMG 12228 / 1C / PRS 101 / PAO1), this protein is Tol-Pal system protein TolR.